Reading from the N-terminus, the 328-residue chain is Deoxynucleotidyltransferase terminal-interacting protein 1 (328 aa).

2 disordered regions span residues 1–30 and 142–176; these read MGATGDTEQPRGPGGAERGGLELGDAGAAG and ELPGIKRGRQAEEESHRGSPIPKKRKGRPPGHVLS. The segment covering 12 to 22 has biased composition (gly residues); the sequence is GPGGAERGGLE. The important for dimerization stretch occupies residues 56–147; sequence MTTSFTDPAI…RLAHELPGIK (92 aa). Positions 142-158 are enriched in basic and acidic residues; that stretch reads ELPGIKRGRQAEEESHR. The a.T hook DNA-binding region spans 158–172; sequence RGSPIPKKRKGRPPG. Residue serine 160 is modified to Phosphoserine. A Nuclear localization signal motif is present at residues 163–169; sequence PKKRKGR. Positions 196 to 315 are important for DNA and nucleosome binding; that stretch reads REGPKWDPAR…MRKYMETLRT (120 aa). The segment at residues 215-236 is a DNA-binding region (H-T-H motif); it reads GSRANKALGMGGTRGRIYIKHP.

Monomer and homodimer. A minor proportion may form homotrimers. Interacts with ZNF541. Interacts with the terminal deoxynucleotidyltransferase DNTT. Interacts with TRERF1. Identified in a histone deacetylase complex that contains DNTTIP1, HDAC1 and MIDEAS; this complex assembles into a tetramer that contains four copies of each protein chain. Component of a histone deacetylase complex containing DNTTIP1, ZNF541, HDAC1 and HDAC2. Identified in a complex with KCTD19, HDAC1, HDAC2 and ZNF541.

It localises to the nucleus. Increases DNTT terminal deoxynucleotidyltransferase activity (in vitro). Also acts as a transcriptional regulator, binding to the consensus sequence 5'-GNTGCATG-3' following an AT-tract. Associates with RAB20 promoter and positively regulates its transcription. Binds DNA and nucleosomes; may recruit HDAC1 complexes to nucleosomes or naked DNA. This is Deoxynucleotidyltransferase terminal-interacting protein 1 (Dnttip1) from Mus musculus (Mouse).